The primary structure comprises 299 residues: Ectoine dioxygenase (299 aa).

The tract at residues 1-40 (MTTTTTNVTDLYPTRGATEVATPRQDPVVWGSPDAPGPVS) is disordered. Q133 contacts L-ectoine. K139 serves as a coordination point for 2-oxoglutarate. Residues H150, D152, and H251 each coordinate Fe cation.

Belongs to the PhyH family. EctD subfamily. Homodimer. Fe(2+) is required as a cofactor.

The catalysed reaction is L-ectoine + 2-oxoglutarate + O2 = 5-hydroxyectoine + succinate + CO2. Involved in the biosynthesis of 5-hydroxyectoine, called compatible solute, which helps organisms to survive extreme osmotic stress by acting as a highly soluble organic osmolyte. Catalyzes the 2-oxoglutarate-dependent selective hydroxylation of L-ectoine to yield (4S,5S)-5-hydroxyectoine. This Streptomyces coelicolor (strain ATCC BAA-471 / A3(2) / M145) protein is Ectoine dioxygenase.